A 341-amino-acid polypeptide reads, in one-letter code: Protein pelota homolog (341 aa).

It belongs to the eukaryotic release factor 1 family. Pelota subfamily. As to quaternary structure, monomer. Requires a divalent metal cation as cofactor.

The protein localises to the cytoplasm. In terms of biological role, may function in recognizing stalled ribosomes, interact with stem-loop structures in stalled mRNA molecules, and effect endonucleolytic cleavage of the mRNA. May play a role in the release non-functional ribosomes and degradation of damaged mRNAs. Has endoribonuclease activity. In Methanospirillum hungatei JF-1 (strain ATCC 27890 / DSM 864 / NBRC 100397 / JF-1), this protein is Protein pelota homolog.